The primary structure comprises 203 residues: Apoptosis-associated speck-like protein containing a CARD (203 aa).

One can recognise a Pyrin domain in the interval Met1–Ser91. One can recognise a CARD domain in the interval Val112–Glu203.

In terms of assembly, self-associates (via pyrin and CARD domains). Interacts (via pyrin domain) with caspa (via pyrin domain). Interacts with caspb; the interaction only occurs in the presence of nlrp1. Component of NLRP1 inflammasomes. Inflammasomes are supramolecular complexes that assemble in the cytosol in response to pathogens and other damage-associated signals and play critical roles in innate immunity and inflammation. The NLRP1 inflammasome is composed of the signal sensor nlrp1, and the adapter pycard (asc), which recruit effector pro-inflammatory caspases caspa and/or caspb. The interaction between nlrp1 and pycard is required for the sequential recruitment of caspa and then caspb. Within the complex caspa is preferentially recruited first and this causes the cleavage of pro-il1b into the midformed il1b. This is followed by the recruitment of caspb, which is activated and cleaves the midformed il1b resulting in il1b maturation. Interacts (via pyrin domain) with NLP3X1 (via pyrin domain). Interacts with gbp4. As to expression, expressed in the kidney, intestine and gill. Expressed at low levels in the heart.

Its subcellular location is the cytoplasm. It localises to the inflammasome. Functions as a key mediator in apoptosis and inflammation. Promotes caspase-mediated apoptosis. Induces proteolytic processing of caspa and caspa-dependent apoptosis. Involved in innate immune response by acting as an integral adapter in the assembly of various inflammasomes which recruit and activate caspase-1 leading to processing and secretion of pro-inflammatory cytokines. Caspase-1-dependent inflammation leads to macrophage pyroptosis, a form of cell death. The function as activating adapter in different types of inflammasomes is mediated by the pyrin and CARD domains and their homotypic interactions. Clustered PYCARD nucleates the formation of caspase-1 filaments through the interaction of their respective CARD domains, acting as a platform for of caspase-1 polymerization. Also involved in transcriptional activation of cytokines and chemokines independent of the inflammasome. In Danio rerio (Zebrafish), this protein is Apoptosis-associated speck-like protein containing a CARD (pycard).